Consider the following 427-residue polypeptide: Glutamate-1-semialdehyde 2,1-aminomutase 2 (427 aa).

The residue at position 267 (K267) is an N6-(pyridoxal phosphate)lysine.

This sequence belongs to the class-III pyridoxal-phosphate-dependent aminotransferase family. HemL subfamily. In terms of assembly, homodimer. The cofactor is pyridoxal 5'-phosphate.

It is found in the cytoplasm. The catalysed reaction is (S)-4-amino-5-oxopentanoate = 5-aminolevulinate. It functions in the pathway porphyrin-containing compound metabolism; protoporphyrin-IX biosynthesis; 5-aminolevulinate from L-glutamyl-tRNA(Glu): step 2/2. This Staphylococcus haemolyticus (strain JCSC1435) protein is Glutamate-1-semialdehyde 2,1-aminomutase 2.